The chain runs to 764 residues: MKLSVNDLNVFVNTPKDIAKLCEDLSRLGLEVESCIPCIAPKNVVVGKVLEKAPHKNAEKLSVCQVDVGKEVLPVVCGAKNVAPNQFAPVALKGAIIGSTTIAKTELRGVESHGMICSSIELGFPKINDGILELDESVGELVLGKELHEYAPFNTHVLEISLTPNRGDCLSVLGIAREISAFYHTPLKPIKALNFTPTSDLITLSADENIESHLAYYLICNHSLKTPLNIKLSLAHNNALSENDLNNFIEFSAHFSGVILNAYSLNKTPIDLIIKNDENNLESVYINHQKRSTIVIKHQDQKDLSECLLLEASYTDPVSLSLKLHALKDKTLQKDNALVYRSTRGSNPNLSDGLNFLSAHLKAAILESKQTEHSLKDCALTFQLEDITEILGLVIEAEKIQNILKNLGFKVSTKEPNSKPQILEVIVPNFRHDIKTIQDIAEEILRFVGIDNLVSKPLHCVSSKNSNPHYDTHRFFENLKHKALACGFKEVIHYVFYSKEKQQKLGFEVLEDPLELQNPITTELNTLRTSLVCGLLDASLRNKNLGFKSIALYEKGSVYNSKREEIQKLGFLVSGLQKKESYPHAKGKAWDFYSFAECVSRIIGDFSLEKLTTQTPINHPYQSAKIIQNNEIIGVIAKIHPKVIQELDLFESYYAEIDASKLKRPAMLLKPFSIYPSSVRDLTLIIDENTAFSKIKKALKDAQIPNLSEILPLDIFKESGNTIALSVRCVIHSLEKTLNDEEVNSAVQKALEILEKEFNARLKG.

The tRNA-binding domain maps to 38-148; it reads CIAPKNVVVG…GELVLGKELH (111 aa). The region spanning 375–455 is the B5 domain; the sequence is LKDCALTFQL…RFVGIDNLVS (81 aa). D433, D439, E442, and E443 together coordinate Mg(2+). Positions 673-763 constitute an FDX-ACB domain; that stretch reads SIYPSSVRDL…LEKEFNARLK (91 aa).

This sequence belongs to the phenylalanyl-tRNA synthetase beta subunit family. Type 1 subfamily. As to quaternary structure, tetramer of two alpha and two beta subunits. It depends on Mg(2+) as a cofactor.

It localises to the cytoplasm. The enzyme catalyses tRNA(Phe) + L-phenylalanine + ATP = L-phenylalanyl-tRNA(Phe) + AMP + diphosphate + H(+). This chain is Phenylalanine--tRNA ligase beta subunit (pheT), found in Helicobacter pylori (strain J99 / ATCC 700824) (Campylobacter pylori J99).